A 662-amino-acid chain; its full sequence is DNA ligase (662 aa).

NAD(+) contacts are provided by residues 31–35 (DYEYD), 80–81 (SL), and Glu109. The active-site N6-AMP-lysine intermediate is Lys111. 4 residues coordinate NAD(+): Arg132, Glu166, Lys282, and Lys306. Cys400, Cys403, Cys418, and Cys423 together coordinate Zn(2+). In terms of domain architecture, BRCT spans 581–662 (KVSNIFEGKT…FEEMLKGENI (82 aa)).

This sequence belongs to the NAD-dependent DNA ligase family. LigA subfamily. Mg(2+) serves as cofactor. Mn(2+) is required as a cofactor.

It carries out the reaction NAD(+) + (deoxyribonucleotide)n-3'-hydroxyl + 5'-phospho-(deoxyribonucleotide)m = (deoxyribonucleotide)n+m + AMP + beta-nicotinamide D-nucleotide.. In terms of biological role, DNA ligase that catalyzes the formation of phosphodiester linkages between 5'-phosphoryl and 3'-hydroxyl groups in double-stranded DNA using NAD as a coenzyme and as the energy source for the reaction. It is essential for DNA replication and repair of damaged DNA. The protein is DNA ligase of Thermoanaerobacter sp. (strain X514).